Here is a 218-residue protein sequence, read N- to C-terminus: Ribose-5-phosphate isomerase A (218 aa).

Substrate is bound by residues 27-30 (TGST), 80-83 (DGAD), and 93-96 (KGGG). The active-site Proton acceptor is Glu102. Lys120 serves as a coordination point for substrate.

It belongs to the ribose 5-phosphate isomerase family. In terms of assembly, homodimer.

The enzyme catalyses aldehydo-D-ribose 5-phosphate = D-ribulose 5-phosphate. It participates in carbohydrate degradation; pentose phosphate pathway; D-ribose 5-phosphate from D-ribulose 5-phosphate (non-oxidative stage): step 1/1. Catalyzes the reversible conversion of ribose-5-phosphate to ribulose 5-phosphate. The chain is Ribose-5-phosphate isomerase A from Thiobacillus denitrificans (strain ATCC 25259 / T1).